Reading from the N-terminus, the 100-residue chain is Urease subunit gamma (100 aa).

The protein belongs to the urease gamma subunit family. In terms of assembly, heterotrimer of UreA (gamma), UreB (beta) and UreC (alpha) subunits. Three heterotrimers associate to form the active enzyme.

It localises to the cytoplasm. It catalyses the reaction urea + 2 H2O + H(+) = hydrogencarbonate + 2 NH4(+). It participates in nitrogen metabolism; urea degradation; CO(2) and NH(3) from urea (urease route): step 1/1. The sequence is that of Urease subunit gamma from Cereibacter sphaeroides (strain ATCC 17025 / ATH 2.4.3) (Rhodobacter sphaeroides).